The sequence spans 207 residues: Cytochrome c biogenesis ATP-binding export protein CcmA (207 aa).

The 203-residue stretch at 2–204 (LECENLSCTR…TTIDIRNFNR (203 aa)) folds into the ABC transporter domain. 34–41 (GPNGSGKT) contributes to the ATP binding site.

This sequence belongs to the ABC transporter superfamily. CcmA exporter (TC 3.A.1.107) family. The complex is composed of two ATP-binding proteins (CcmA) and two transmembrane proteins (CcmB).

The protein resides in the cell membrane. It carries out the reaction heme b(in) + ATP + H2O = heme b(out) + ADP + phosphate + H(+). In terms of biological role, part of the ABC transporter complex CcmAB involved in the biogenesis of c-type cytochromes; once thought to export heme, this seems not to be the case, but its exact role is uncertain. Responsible for energy coupling to the transport system. This is Cytochrome c biogenesis ATP-binding export protein CcmA from Wolbachia pipientis wMel.